A 380-amino-acid chain; its full sequence is MEITLEKALKEIEGNKFFKVLKENDLVKVSYRFNAPQTFDTPLKRELRGITFSSKTGRVVSRPFHKFFNLGEHPETEKERLKGKLFILREKLDGTMLHPAVVEGRVRLFTQKDFANPQIEKGEELLRRNDKLLKATRRLLEKGLTPIFELISPEFQLVIPYETEELILTEVRDNRTGHYLLEEAENELIQMGFKLPRKRVGTVEEAERLIEEAENVEGFVAKNFDESEPFPLFVKIKSPWYHRAHYAFTYLHNIPDHKLFNLFLNNRADDIFATVTNPAVKEKKSRRLKILTDIYHSLLSSAEKLSQLYGKVKEETLKAEAQKELKKIEREFKEELKLFNFPVEHLTEAARLAKQKKKFDKFLGTKLYTALKHQTVKLKT.

Putative RNA ligase. Is able to catalyze the adenylation reaction of ssDNA 3'-terminal phosphate (ssDNA 3'p) to 3'-adenylated DNA (ssDNA 3'pp5'A). This is Putative RNA ligase from Thermovibrio ammonificans (strain DSM 15698 / JCM 12110 / HB-1).